The sequence spans 181 residues: UPF0398 protein lmo1889 (181 aa).

The protein belongs to the UPF0398 family.

The chain is UPF0398 protein lmo1889 from Listeria monocytogenes serovar 1/2a (strain ATCC BAA-679 / EGD-e).